The sequence spans 2175 residues: Genome polyprotein (2175 aa).

G2 is lipidated: N-myristoyl glycine; by host. Residues 2–1485 (GAQLSRNTAG…NVNRALAVIQ (1484 aa)) lie on the Cytoplasmic side of the membrane. Amphipathic alpha-helix stretches follow at residues 557–574 (ILQNDPGKMLKDAIDKQV) and 560–581 (NDPGKMLKDAIDKQVAGALVAG). Residues H861 and D879 each act as for protease 2A activity in the active site. Positions 896 and 898 each coordinate Zn(2+). Catalysis depends on C950, which acts as the For protease 2A activity. C956 and H958 together coordinate Zn(2+). A membrane-binding region spans residues 1090–1162 (SDNWMKKFTE…EHSSASQERQ (73 aa)). The oligomerization stretch occupies residues 1090-1228 (SDNWMKKFTE…SPGTGQSLAT (139 aa)). The interval 1111–1115 (AAKIS) is RNA-binding. Residues 1194 to 1352 (EKRVLGAMQF…YKRDGVTLDV (159 aa)) form the SF3 helicase domain. Residues C1359, C1370, and C1375 each coordinate Zn(2+). The C4-type; degenerate zinc-finger motif lies at 1359-1375 (CEDCSPANFKKCMPLIC). The tract at residues 1403–1410 (ESNRRYNI) is RNA-binding. The segment at 1414–1419 (LEALFQ) is oligomerization. An intramembrane segment occupies 1486–1501 (SVSLIAAVAGTIYIVY). Residues 1502-2175 (RLFSGMQGPY…ALERKWYDSF (674 aa)) are Cytoplasmic-facing. Position 1511 is an O-(5'-phospho-RNA)-tyrosine (Y1511). The Peptidase C3 domain occupies 1532–1710 (GPLFDFGVSL…FAASLLRRYF (179 aa)). Residues H1571, E1602, and C1678 each act as for protease 3C activity in the active site. The region spanning 1941 to 2056 (GELFGFDYTA…SYPYEIDASL (116 aa)) is the RdRp catalytic domain. Residues D1947 and D2042 each coordinate Mg(2+).

It belongs to the picornaviruses polyprotein family. In terms of assembly, interacts with capsid protein VP1 and capsid protein VP3 to form heterotrimeric protomers. As to quaternary structure, interacts with capsid protein VP0, and capsid protein VP3 to form heterotrimeric protomers. Five protomers subsequently associate to form pentamers which serve as building blocks for the capsid. Interacts with capsid protein VP2, capsid protein VP3 and capsid protein VP4 following cleavage of capsid protein VP0. Interacts with capsid protein VP1 and capsid protein VP3 in the mature capsid. In terms of assembly, interacts with capsid protein VP0 and capsid protein VP1 to form heterotrimeric protomers. Five protomers subsequently associate to form pentamers which serve as building blocks for the capsid. Interacts with capsid protein VP4 in the mature capsid. Interacts with protein 2C; this interaction may be important for virion morphogenesis. As to quaternary structure, interacts with capsid protein VP1 and capsid protein VP3. Homodimer. In terms of assembly, homohexamer; forms a hexameric ring structure with 6-fold symmetry characteristic of AAA+ ATPases. Interacts (via N-terminus) with host RTN3 (via reticulon domain); this interaction is important for viral replication. Interacts with capsid protein VP3; this interaction may be important for virion morphogenesis. As to quaternary structure, interacts with protein 3CD. Homodimer. Interacts with host GBF1. Interacts (via GOLD domain) with host ACBD3 (via GOLD domain); this interaction allows the formation of a viral protein 3A/ACBD3 heterotetramer with a 2:2 stoichiometry, which will stimulate the recruitment of host PI4KB in order to synthesize PI4P at the viral RNA replication sites. In terms of assembly, interacts with RNA-directed RNA polymerase. As to quaternary structure, interacts with protein 3AB and with RNA-directed RNA polymerase. Interacts with Viral protein genome-linked and with protein 3CD. Requires Mg(2+) as cofactor. Post-translationally, specific enzymatic cleavages in vivo by the viral proteases yield processing intermediates and the mature proteins. In terms of processing, myristoylation is required for the formation of pentamers during virus assembly. Further assembly of 12 pentamers and a molecule of genomic RNA generates the provirion. During virion maturation, immature virions are rendered infectious following cleavage of VP0 into VP4 and VP2. This maturation seems to be an autocatalytic event triggered by the presence of RNA in the capsid and it is followed by a conformational change infectious virion. Post-translationally, myristoylation is required during RNA encapsidation and formation of the mature virus particle. In terms of processing, VPg is uridylylated by the polymerase into VPg-pUpU. This acts as a nucleotide-peptide primer for the genomic RNA replication.

It localises to the virion. It is found in the host cytoplasm. The protein localises to the host cytoplasmic vesicle membrane. Its subcellular location is the host nucleus. The enzyme catalyses a ribonucleoside 5'-triphosphate + H2O = a ribonucleoside 5'-diphosphate + phosphate + H(+). It carries out the reaction Selective cleavage of Tyr-|-Gly bond in the picornavirus polyprotein.. The catalysed reaction is RNA(n) + a ribonucleoside 5'-triphosphate = RNA(n+1) + diphosphate. It catalyses the reaction Selective cleavage of Gln-|-Gly bond in the poliovirus polyprotein. In other picornavirus reactions Glu may be substituted for Gln, and Ser or Thr for Gly.. Its activity is regulated as follows. Replication or transcription is subject to high level of random mutations by the nucleotide analog ribavirin. Forms an icosahedral capsid of pseudo T=3 symmetry with capsid proteins VP2 and VP3. The capsid is 300 Angstroms in diameter, composed of 60 copies of each capsid protein and enclosing the viral positive strand RNA genome. Capsid protein VP1 mainly forms the vertices of the capsid. Capsid protein VP1 interacts with host cell receptor to provide virion attachment to target host cells. This attachment induces virion internalization. Tyrosine kinases are probably involved in the entry process. After binding to its receptor, the capsid undergoes conformational changes. Capsid protein VP1 N-terminus (that contains an amphipathic alpha-helix) and capsid protein VP4 are externalized. Together, they shape a pore in the host membrane through which viral genome is translocated to host cell cytoplasm. In terms of biological role, forms an icosahedral capsid of pseudo T=3 symmetry with capsid proteins VP2 and VP3. The capsid is 300 Angstroms in diameter, composed of 60 copies of each capsid protein and enclosing the viral positive strand RNA genome. Functionally, lies on the inner surface of the capsid shell. After binding to the host receptor, the capsid undergoes conformational changes. Capsid protein VP4 is released, Capsid protein VP1 N-terminus is externalized, and together, they shape a pore in the host membrane through which the viral genome is translocated into the host cell cytoplasm. Its function is as follows. Component of immature procapsids, which is cleaved into capsid proteins VP4 and VP2 after maturation. Allows the capsid to remain inactive before the maturation step. Cysteine protease that cleaves viral polyprotein and specific host proteins. It is responsible for the autocatalytic cleavage between the P1 and P2 regions, which is the first cleavage occurring in the polyprotein. Also cleaves the host translation initiation factor EIF4G1, in order to shut down the capped cellular mRNA translation. Inhibits the host nucleus-cytoplasm protein and RNA trafficking by cleaving host members of the nuclear pores. Counteracts stress granule formation probably by antagonizing its assembly or promoting its dissassembly. In terms of biological role, plays an essential role in the virus replication cycle by acting as a viroporin. Creates a pore in the host endoplasmic reticulum and as a consequence releases Ca2+ in the cytoplasm of infected cell. In turn, high levels of cytoplasmic calcium may trigger membrane trafficking and transport of viral ER-associated proteins to viroplasms, sites of viral genome replication. Functionally, induces and associates with structural rearrangements of intracellular membranes. Displays RNA-binding, nucleotide binding and NTPase activities. May play a role in virion morphogenesis and viral RNA encapsidation by interacting with the capsid protein VP3. Its function is as follows. Localizes the viral replication complex to the surface of membranous vesicles. Together with protein 3CD binds the Cis-Active RNA Element (CRE) which is involved in RNA synthesis initiation. Acts as a cofactor to stimulate the activity of 3D polymerase, maybe through a nucleid acid chaperone activity. Localizes the viral replication complex to the surface of membranous vesicles. It inhibits host cell endoplasmic reticulum-to-Golgi apparatus transport and causes the disassembly of the Golgi complex, possibly through GBF1 interaction. This would result in depletion of MHC, trail receptors and IFN receptors at the host cell surface. Plays an essential role in viral RNA replication by recruiting ACBD3 and PI4KB at the viral replication sites, thereby allowing the formation of the rearranged membranous structures where viral replication takes place. In terms of biological role, acts as a primer for viral RNA replication and remains covalently bound to viral genomic RNA. VPg is uridylylated prior to priming replication into VPg-pUpU. The oriI viral genomic sequence may act as a template for this. The VPg-pUpU is then used as primer on the genomic RNA poly(A) by the RNA-dependent RNA polymerase to replicate the viral genome. During genome replication, the VPg-RNA linkage is removed by the host TDP2, thereby accelerating replication. During the late stage of the replication cycle, host TDP2 is excluded from sites of viral RNA synthesis and encapsidation, allowing for the generation of progeny virions. Functionally, involved in the viral replication complex and viral polypeptide maturation. It exhibits protease activity with a specificity and catalytic efficiency that is different from protease 3C. Protein 3CD lacks polymerase activity. Protein 3CD binds to the 5'UTR of the viral genome. Its function is as follows. Replicates the viral genomic RNA on the surface of intracellular membranes. May form linear arrays of subunits that propagate along a strong head-to-tail interaction called interface-I. Covalently attaches UMP to a tyrosine of VPg, which is used to prime RNA synthesis. The positive stranded RNA genome is first replicated at virus induced membranous vesicles, creating a dsRNA genomic replication form. This dsRNA is then used as template to synthesize positive stranded RNA genomes. ss(+)RNA genomes are either translated, replicated or encapsidated. Major viral protease that mediates proteolytic processing of the polyprotein. Cleaves host EIF5B, contributing to host translation shutoff. Also cleaves host PABPC1, contributing to host translation shutoff. Cleaves host NLRP1, triggers host N-glycine-mediated degradation of the autoinhibitory NLRP1 N-terminal fragment. This is Genome polyprotein from Bos taurus (Bovine).